Consider the following 312-residue polypeptide: Small ribosomal subunit protein uS2m (312 aa).

The protein belongs to the universal ribosomal protein uS2 family.

The protein resides in the mitochondrion. The polypeptide is Small ribosomal subunit protein uS2m (RPS2) (Acanthamoeba castellanii (Amoeba)).